A 130-amino-acid polypeptide reads, in one-letter code: Small ribosomal subunit protein uS8 (130 aa).

The protein belongs to the universal ribosomal protein uS8 family. As to quaternary structure, part of the 30S ribosomal subunit.

One of the primary rRNA binding proteins, it binds directly to 16S rRNA central domain where it helps coordinate assembly of the platform of the 30S subunit. This Pyrobaculum islandicum (strain DSM 4184 / JCM 9189 / GEO3) protein is Small ribosomal subunit protein uS8.